We begin with the raw amino-acid sequence, 269 residues long: Tryptophan synthase alpha chain (269 aa).

Catalysis depends on proton acceptor residues Glu-49 and Asp-60.

This sequence belongs to the TrpA family. Tetramer of two alpha and two beta chains.

The catalysed reaction is (1S,2R)-1-C-(indol-3-yl)glycerol 3-phosphate + L-serine = D-glyceraldehyde 3-phosphate + L-tryptophan + H2O. The protein operates within amino-acid biosynthesis; L-tryptophan biosynthesis; L-tryptophan from chorismate: step 5/5. The alpha subunit is responsible for the aldol cleavage of indoleglycerol phosphate to indole and glyceraldehyde 3-phosphate. This chain is Tryptophan synthase alpha chain, found in Buchnera aphidicola subsp. Acyrthosiphon pisum (strain APS) (Acyrthosiphon pisum symbiotic bacterium).